The sequence spans 218 residues: Pyridoxine/pyridoxamine 5'-phosphate oxidase (218 aa).

Substrate is bound by residues 14-17 (RREY) and Lys72. Residues 67 to 72 (RIVLLK), 82 to 83 (YT), Arg88, Lys89, and Gln111 contribute to the FMN site. Substrate contacts are provided by Tyr129, Arg133, and Ser137. FMN is bound by residues 146–147 (QS) and Trp191. 197-199 (RLH) serves as a coordination point for substrate. Arg201 provides a ligand contact to FMN.

The protein belongs to the pyridoxamine 5'-phosphate oxidase family. As to quaternary structure, homodimer. It depends on FMN as a cofactor.

The catalysed reaction is pyridoxamine 5'-phosphate + O2 + H2O = pyridoxal 5'-phosphate + H2O2 + NH4(+). The enzyme catalyses pyridoxine 5'-phosphate + O2 = pyridoxal 5'-phosphate + H2O2. It functions in the pathway cofactor metabolism; pyridoxal 5'-phosphate salvage; pyridoxal 5'-phosphate from pyridoxamine 5'-phosphate: step 1/1. The protein operates within cofactor metabolism; pyridoxal 5'-phosphate salvage; pyridoxal 5'-phosphate from pyridoxine 5'-phosphate: step 1/1. Catalyzes the oxidation of either pyridoxine 5'-phosphate (PNP) or pyridoxamine 5'-phosphate (PMP) into pyridoxal 5'-phosphate (PLP). The polypeptide is Pyridoxine/pyridoxamine 5'-phosphate oxidase (Escherichia coli O127:H6 (strain E2348/69 / EPEC)).